A 223-amino-acid chain; its full sequence is Small ribosomal subunit protein uS3 (223 aa).

The KH type-2 domain maps to 39 to 108 (IRNFVKKNSY…NILINIVEVK (70 aa)).

This sequence belongs to the universal ribosomal protein uS3 family. In terms of assembly, part of the 30S ribosomal subunit. Forms a tight complex with proteins S10 and S14.

In terms of biological role, binds the lower part of the 30S subunit head. Binds mRNA in the 70S ribosome, positioning it for translation. The protein is Small ribosomal subunit protein uS3 of Clostridium botulinum (strain Okra / Type B1).